A 442-amino-acid chain; its full sequence is UDP-N-acetylmuramoylalanine--D-glutamate ligase (442 aa).

113–119 serves as a coordination point for ATP; the sequence is GSNGKTT.

The protein belongs to the MurCDEF family.

It is found in the cytoplasm. The enzyme catalyses UDP-N-acetyl-alpha-D-muramoyl-L-alanine + D-glutamate + ATP = UDP-N-acetyl-alpha-D-muramoyl-L-alanyl-D-glutamate + ADP + phosphate + H(+). It functions in the pathway cell wall biogenesis; peptidoglycan biosynthesis. Functionally, cell wall formation. Catalyzes the addition of glutamate to the nucleotide precursor UDP-N-acetylmuramoyl-L-alanine (UMA). The polypeptide is UDP-N-acetylmuramoylalanine--D-glutamate ligase (Coxiella burnetii (strain CbuG_Q212) (Coxiella burnetii (strain Q212))).